A 470-amino-acid polypeptide reads, in one-letter code: Syncoilin (470 aa).

The interval 1–43 is disordered; the sequence is MASPEPLRGGDGARASREPHTEASFPLQESESPKEAKTFNPEA. Residues 1-148 form a head region; sequence MASPEPLRGG…TEGSLPAQPI (148 aa). Serine 32 is subject to Phosphoserine. Residues 157-452 enclose the IF rod domain; sequence SVEDLERLEA…AMLPKSLEQA (296 aa). The coil 1A stretch occupies residues 158–192; the sequence is VEDLERLEARFQQCVQAVSQLEEERDQLIHELVLL. The interval 193–219 is linker 1; it reads REPALQEVQQVHQDILAAYKLHAQAEL. The segment at 220–297 is coil 1b; sequence ERDGLREEIR…KEQLQQQLEA (78 aa). Residues 298 to 337 are linker 2; it reads PPTQSDGHFLQESRRLSTQFENLMAESRQGLEEEYEPQLL. Phosphoserine is present on serine 314. Positions 338 to 445 are coil 2; the sequence is RLLERKEAGT…EELSTYKAML (108 aa). The disordered stretch occupies residues 446–470; the sequence is PKSLEQADAPTSQAGGVEAQSPGTV. Residues 446-470 form a tail region; it reads PKSLEQADAPTSQAGGVEAQSPGTV.

This sequence belongs to the intermediate filament family. May link the dystrophin-associated glycoprotein complex (DAPC) to intracellular desmin (DES) filaments. Interacts with DES and DTNA. In terms of tissue distribution, detected strongly in skeletal muscle and heart and weakly in lung (at protein level). Highly expressed in skeletal muscle and lung and weakly in lung and testis.

The protein resides in the cytoplasm. It is found in the perinuclear region. In terms of biological role, atypical type III intermediate filament (IF) protein that may play a supportive role in the efficient coupling of mechanical stress between the myofibril and fiber exterior. May facilitate lateral force transmission during skeletal muscle contraction. Does not form homofilaments nor heterofilaments with other IF proteins. The chain is Syncoilin (Sync) from Mus musculus (Mouse).